The sequence spans 155 residues: MAPARAGCCPLLLLLLLGLWVAEIPVSAKPESMTPSQWFKTQDVQPSPQACDSAMRNINNYKKWCKDLNTFLHEPFSSVAATCQTPNITCKNGHKNCHQSHRPVSLTMCGLISGKYLNCKYKEEHQNKSYIVACDPPQQGDPEYPLVPVHLDKVV.

Residues 1–28 form the signal peptide; that stretch reads MAPARAGCCPLLLLLLLGLWVAEIPVSA. 3 disulfides stabilise this stretch: Cys-65-Cys-119, Cys-83-Cys-134, and Cys-90-Cys-97. Substrate is bound by residues 66–70 and Lys-91; that span reads KDLNT. The active-site Proton donor is His-150.

Belongs to the pancreatic ribonuclease family.

Its subcellular location is the secreted. Functionally, has a low ribonuclease activity. The protein is Ribonuclease 8 (RNASE8) of Saguinus oedipus (Cotton-top tamarin).